Consider the following 742-residue polypeptide: mRNA export factor ICP27 homolog (742 aa).

A compositionally biased stretch (basic and acidic residues) spans 1–11; sequence MELHSRGRHDA. Positions 1–202 are disordered; the sequence is MELHSRGRHD…NHHGSSAGPQ (202 aa). The span at 72–85 shows a compositional bias: basic residues; sequence SHHHRPCVPARRPR. Basic and acidic residues predominate over residues 153 to 171; sequence KSYDNDDGEPHHHGGDSTH. A compositionally biased stretch (polar residues) spans 179 to 202; that stretch reads CPTTFGSSHPSSANNHHGSSAGPQ. 4 residues coordinate Zn(2+): cysteine 387, histidine 494, cysteine 496, and cysteine 501. A CHC2-type zinc finger spans residues 387 to 501; that stretch reads CILDHQDGWG…QCHECQNEMC (115 aa). Residues 540–742 are disordered; sequence ASNHATAGGQ…MLCYSDDMDD (203 aa). A compositionally biased stretch (basic and acidic residues) spans 578–587; the sequence is YDKKDREGSH. Over residues 614-626 the composition is skewed to acidic residues; sequence GELEEDEDSDDAS. The segment covering 692-703 has biased composition (polar residues); the sequence is QSANGNHSTTAT.

This sequence belongs to the HHV-1 ICP27 protein family. In terms of assembly, self-associates and forms high-molecular-mass complexes. Interacts with host DDX39A and DDX39B; these interactions are required for UL69 function in mRNA export. Interacts with host SUPT6H, EIF4A1 and PABPC1. Phosphorylated by UL97 and host CDK1, CDK7 and CD9. Phosphorylation by CDKs impacts on UL69 nuclear localization and activity.

It is found in the virion tegument. It localises to the virion. Its subcellular location is the host nucleus. The protein localises to the host cytoplasm. Immediate early (EI) protein that plays many roles during productive infection including regulation of host cell cycle progression, regulation of viral gene expression or nuclear export of intronless viral RNAs. Acts as a transcriptional transactivator via interaction with the cellular transcription elongation factor SUPT6H and as a nuclear RNA export factor via interaction with UAP56, a component of the cellular mRNA export machinery. The polypeptide is mRNA export factor ICP27 homolog (Human cytomegalovirus (strain Merlin) (HHV-5)).